We begin with the raw amino-acid sequence, 179 residues long: Large ribosomal subunit protein uL5 (179 aa).

This sequence belongs to the universal ribosomal protein uL5 family. In terms of assembly, part of the 50S ribosomal subunit; part of the 5S rRNA/L5/L18/L25 subcomplex. Contacts the 5S rRNA and the P site tRNA. Forms a bridge to the 30S subunit in the 70S ribosome.

Its function is as follows. This is one of the proteins that bind and probably mediate the attachment of the 5S RNA into the large ribosomal subunit, where it forms part of the central protuberance. In the 70S ribosome it contacts protein S13 of the 30S subunit (bridge B1b), connecting the 2 subunits; this bridge is implicated in subunit movement. Contacts the P site tRNA; the 5S rRNA and some of its associated proteins might help stabilize positioning of ribosome-bound tRNAs. The polypeptide is Large ribosomal subunit protein uL5 (Carboxydothermus hydrogenoformans (strain ATCC BAA-161 / DSM 6008 / Z-2901)).